The primary structure comprises 187 residues: Protein GrpE (187 aa).

The segment covering 1–11 has biased composition (basic and acidic residues); that stretch reads MTDSSNEHETE. The interval 1 to 23 is disordered; it reads MTDSSNEHETENPSVPNPDNEIQ.

Belongs to the GrpE family. In terms of assembly, homodimer.

It localises to the cytoplasm. Functionally, participates actively in the response to hyperosmotic and heat shock by preventing the aggregation of stress-denatured proteins, in association with DnaK and GrpE. It is the nucleotide exchange factor for DnaK and may function as a thermosensor. Unfolded proteins bind initially to DnaJ; upon interaction with the DnaJ-bound protein, DnaK hydrolyzes its bound ATP, resulting in the formation of a stable complex. GrpE releases ADP from DnaK; ATP binding to DnaK triggers the release of the substrate protein, thus completing the reaction cycle. Several rounds of ATP-dependent interactions between DnaJ, DnaK and GrpE are required for fully efficient folding. In Chlamydia felis (strain Fe/C-56) (Chlamydophila felis), this protein is Protein GrpE.